Reading from the N-terminus, the 530-residue chain is MFS transporter PfmaC (530 aa).

The disordered stretch occupies residues 41-76 (TTAVSDGDNQSSTMSGKTAAGDATSPASGSGSGGWF). Residues 42-56 (TAVSDGDNQSSTMSG) show a composition bias toward polar residues. The segment covering 59 to 69 (AAGDATSPASG) has biased composition (low complexity). 10 helical membrane-spanning segments follow: residues 165-182 (YWLP…LGMY), 195-215 (FFIG…LGCW), 226-246 (ALFV…QAAL), 261-281 (WLFI…LFCF), 324-344 (IFTS…SLTV), 369-389 (NIPT…GFVS), 396-416 (GPVC…FTAW), 422-442 (LLMA…LLAG), 456-476 (AFIL…FQQL), and 493-513 (PSAL…IPLL).

It belongs to the major facilitator superfamily. Allantoate permease family.

It localises to the cell membrane. In terms of biological role, MFS transporter; part of the gene cluster that mediates the biosynthesis of dihydroxynaphthalene (DHN)-melanin, a bluish-green pigment forming a dark layer in the conidial wall that protects the conidia from UV radiations. This chain is MFS transporter PfmaC, found in Pestalotiopsis fici (strain W106-1 / CGMCC3.15140).